The sequence spans 576 residues: Gamma-aminobutyric acid receptor subunit beta (576 aa).

Residues 1–29 form the signal peptide; that stretch reads MSDSMLYQTLQTCLPKSRLITLWLAFTLA. Residues 30 to 268 lie on the Extracellular side of the membrane; the sequence is MLIQEPRRHA…IQFVRSMGYY (239 aa). N-linked (GlcNAc...) asparagine glycosylation occurs at N56. An intrachain disulfide couples C183 to C197. N251 is a glycosylation site (N-linked (GlcNAc...) asparagine). Transmembrane regions (helical) follow at residues 269–289, 298–320, and 330–350; these read LIQI…SFWL, VALG…AALP, and VYLG…ATVG. The Cytoplasmic portion of the chain corresponds to 351–540; sequence YMAKRIQMRK…TPSDIDKYSR (190 aa). Disordered regions lie at residues 372–418 and 452–507; these read QKKQ…QTVS and HDPK…GDAE. Residues 398 to 412 are compositionally biased toward basic residues; sequence HGHGHGHHSHGHPHV. Positions 475-490 are enriched in pro residues; it reads PVGPHGPGPQGPPGGP. Residues 491–501 are compositionally biased toward gly residues; sequence PAGGGGGGAPP. A helical transmembrane segment spans residues 541-561; the sequence is IVFPVCFVCFNLMYWIIYLHV.

It belongs to the ligand-gated ion channel (TC 1.A.9) family. Gamma-aminobutyric acid receptor (TC 1.A.9.5) subfamily. In terms of assembly, homomultimer.

It localises to the postsynaptic cell membrane. The protein localises to the cell membrane. In terms of biological role, GABA, an inhibitory neurotransmitter, mediates neuronal inhibition by binding to the GABA receptor and opening an integral chloride channel. This chain is Gamma-aminobutyric acid receptor subunit beta, found in Musca domestica (House fly).